Consider the following 187-residue polypeptide: Intermembrane transport lipoprotein PqiC (187 aa).

The N-terminal stretch at 1 to 15 is a signal peptide; it reads MKKWLVTIAALWLAG. Residue Cys16 is the site of N-palmitoyl cysteine attachment. Cys16 carries S-diacylglycerol cysteine lipidation.

As to quaternary structure, may form a complex composed of PqiA, PqiB and PqiC. Interacts with PqiB.

It localises to the cell outer membrane. Its function is as follows. Component of a transport pathway that contributes to membrane integrity. The sequence is that of Intermembrane transport lipoprotein PqiC from Escherichia coli (strain K12).